Reading from the N-terminus, the 417-residue chain is Actin-related protein 10 (417 aa).

It belongs to the actin family. Subunit of dynactin, a multiprotein complex part of a tripartite complex with dynein and a adapter, such as BICDL1, BICD2 or HOOK3. The dynactin complex is built around ACTR1A/ACTB filament and consists of an actin-related filament composed of a shoulder domain, a pointed end and a barbed end. Its length is defined by its flexible shoulder domain. The soulder is composed of 2 DCTN1 subunits, 4 DCTN2 and 2 DCTN3. The 4 DCNT2 (via N-terminus) bind the ACTR1A filament and act as molecular rulers to determine the length. The pointed end is important for binding dynein-dynactin cargo adapters. Consists of 4 subunits: ACTR10, DCNT4, DCTN5 and DCTN6. The barbed end is composed of a CAPZA1:CAPZB heterodimers, which binds ACTR1A/ACTB filament and dynactin and stabilizes dynactin.

Its subcellular location is the cytoplasm. It is found in the cytoskeleton. Part of the dynactin complex that activates the molecular motor dynein for ultra-processive transport along microtubules. The sequence is that of Actin-related protein 10 (Actr10) from Mus musculus (Mouse).